We begin with the raw amino-acid sequence, 566 residues long: Putative ABC transporter ATP-binding protein BA_2641/GBAA_2641/BAS2461 (566 aa).

ABC transporter domains follow at residues 5-246 (ISFE…GLRE) and 300-533 (LKVE…ANLK). Residues 39–46 (GRSGSGKS) and 333–340 (GHNGAGKS) each bind ATP.

Belongs to the ABC transporter superfamily.

The protein localises to the cell membrane. In terms of biological role, probably part of an ABC transporter complex. Responsible for energy coupling to the transport system. The chain is Putative ABC transporter ATP-binding protein BA_2641/GBAA_2641/BAS2461 from Bacillus anthracis.